The chain runs to 421 residues: Shaggy-related protein kinase kappa (421 aa).

Over residues methionine 1–valine 10 the composition is skewed to gly residues. The disordered stretch occupies residues methionine 1 to alanine 60. Residues leucine 29–valine 42 are compositionally biased toward basic and acidic residues. Residues glutamate 43–isoleucine 54 show a composition bias toward acidic residues. Residues tyrosine 83–phenylalanine 367 enclose the Protein kinase domain. ATP is bound by residues valine 89–valine 97 and lysine 112. Aspartate 208 functions as the Proton acceptor in the catalytic mechanism. Tyrosine 243 is subject to Phosphotyrosine.

Belongs to the protein kinase superfamily. CMGC Ser/Thr protein kinase family. GSK-3 subfamily. Autophosphorylated mainly on threonine and serine residues. As to expression, expressed exclusively in inflorescences.

The catalysed reaction is L-seryl-[protein] + ATP = O-phospho-L-seryl-[protein] + ADP + H(+). It carries out the reaction L-threonyl-[protein] + ATP = O-phospho-L-threonyl-[protein] + ADP + H(+). Functionally, may mediate extracellular signals to regulate transcription in differentiating cells. The polypeptide is Shaggy-related protein kinase kappa (ASK10) (Arabidopsis thaliana (Mouse-ear cress)).